The following is a 233-amino-acid chain: MNTPAQLSLPLYLPDDETFASFWPGDNSSLLAALQNVLRQEHSGYIYLWAREGAGRSHLLHAACAELSQRGDAVGYVPLDKRTWFVPEVLDGMEHLSLVCIDNIECIAGDELWEMAIFDLYNRILESGKTRLLITGDRPPRQLNLGLPDLASRLDWGQIYKLQPLSDEDKLQALQLRARLRGFELPEDVGRFLLKRLDREMRTLFMTLDQLDRASITAQRKLTIPFVKEILKL.

It belongs to the DnaA family. HdA subfamily. As to quaternary structure, the active form seems to be an ADP-bound monomer. Forms the RIDA complex (regulatory inactivation of DnaA) of ATP-DnaA, ADP-Hda and the DNA-loaded beta sliding clamp (dnaN).

Its function is as follows. Mediates the interaction of DNA replication initiator protein DnaA with DNA polymerase subunit beta sliding clamp (dnaN). Stimulates hydrolysis of ATP-DnaA to ADP-DnaA, rendering DnaA inactive for reinitiation, a process called regulatory inhibition of DnaA or RIDA. In Shigella boydii serotype 4 (strain Sb227), this protein is DnaA regulatory inactivator Hda.